The following is a 68-amino-acid chain: MARITVDDCLKKIPNRFDMTLVATIRARQLSVGGSPMVEPARDKPTVIALREISQGLVGTDILTTGPI.

The protein belongs to the RNA polymerase subunit omega family. The RNAP catalytic core consists of 2 alpha, 1 beta, 1 beta' and 1 omega subunit. When a sigma factor is associated with the core the holoenzyme is formed, which can initiate transcription.

The catalysed reaction is RNA(n) + a ribonucleoside 5'-triphosphate = RNA(n+1) + diphosphate. Its function is as follows. Promotes RNA polymerase assembly. Latches the N- and C-terminal regions of the beta' subunit thereby facilitating its interaction with the beta and alpha subunits. The protein is DNA-directed RNA polymerase subunit omega of Nitrosospira multiformis (strain ATCC 25196 / NCIMB 11849 / C 71).